We begin with the raw amino-acid sequence, 252 residues long: MILQIDMGNTRLKWRVKNKLASLVEGHCLWSDAEDALMASLMPYGGLISRILVASVRSQEDNQAFMQLLGRLTPLVPEFAYSQSHNDGLVNGYADPERLGVDRWLALLAGYDRHKAYPFMLMSAGTALTLDLVDGQGHHLGGYIAPGLDVFVRAVSHSAAQINVVKSNNLFDASPGRSTVDAVHHAFAAMLSGLVQKSYELLSRNNGFAPVLLITGGDADVVKGLFHQGITCPDLVFSGLDIYFDLRAGNNG.

6–13 (DMGNTRLK) is a binding site for ATP. Substrate is bound by residues tyrosine 93 and 100–103 (GVDR). The active-site Proton acceptor is the aspartate 102. Threonine 126 contributes to the ATP binding site. Residue threonine 179 coordinates substrate.

The protein belongs to the type III pantothenate kinase family. Homodimer. Requires NH4(+) as cofactor. K(+) is required as a cofactor.

It localises to the cytoplasm. It carries out the reaction (R)-pantothenate + ATP = (R)-4'-phosphopantothenate + ADP + H(+). It participates in cofactor biosynthesis; coenzyme A biosynthesis; CoA from (R)-pantothenate: step 1/5. In terms of biological role, catalyzes the phosphorylation of pantothenate (Pan), the first step in CoA biosynthesis. The protein is Type III pantothenate kinase of Cellvibrio japonicus (strain Ueda107) (Pseudomonas fluorescens subsp. cellulosa).